A 305-amino-acid polypeptide reads, in one-letter code: NAD kinase 2 (305 aa).

Residue Asp-78 is the Proton acceptor of the active site. NAD(+)-binding positions include 78 to 79 (DG), 152 to 153 (NE), Asp-182, 193 to 198 (TAYSLS), and Asn-251.

It belongs to the NAD kinase family. It depends on a divalent metal cation as a cofactor.

It is found in the cytoplasm. It catalyses the reaction NAD(+) + ATP = ADP + NADP(+) + H(+). Functionally, involved in the regulation of the intracellular balance of NAD and NADP, and is a key enzyme in the biosynthesis of NADP. Catalyzes specifically the phosphorylation on 2'-hydroxyl of the adenosine moiety of NAD to yield NADP. This Trichormus variabilis (strain ATCC 29413 / PCC 7937) (Anabaena variabilis) protein is NAD kinase 2.